The following is a 304-amino-acid chain: Arginine-binding protein ArgT (304 aa).

Residues 1-26 form the signal peptide; that stretch reads MRFPKIPKRAVAATVGIVATSFTLAS. Cysteine 27 carries N-palmitoyl cysteine lipidation. A lipid anchor (S-diacylglycerol cysteine) is attached at cysteine 27.

This sequence belongs to the bacterial solute-binding protein 3 family. The complex is probably composed of two ATP-binding proteins (ArgV), two transmembrane proteins (ArgU) and a solute-binding protein (ArgT).

The protein localises to the cell membrane. Functionally, part of the ABC transporter complex ArgTUV involved in L-arginine import. May also transport L-citrulline. Binds L-arginine and its molecular precursor L-citrulline, but not L-histidine, L-glutamate, L-glutamine, L-lysine or L-cysteine. The sequence is that of Arginine-binding protein ArgT from Corynebacterium glutamicum (strain ATCC 13032 / DSM 20300 / JCM 1318 / BCRC 11384 / CCUG 27702 / LMG 3730 / NBRC 12168 / NCIMB 10025 / NRRL B-2784 / 534).